The sequence spans 481 residues: GTPase Der (481 aa).

EngA-type G domains lie at 3 to 166 (PVVA…ESDF) and 194 to 367 (IKLA…MSAT). GTP contacts are provided by residues 9 to 16 (GRPNVGKS), 56 to 60 (DTGGI), 118 to 121 (NKVD), 200 to 207 (GKPNVGKS), 247 to 251 (DTAGV), and 312 to 315 (NKWD). Residues 368–452 (KRINTALLTQ…PIKIEFREGN (85 aa)) form the KH-like domain.

The protein belongs to the TRAFAC class TrmE-Era-EngA-EngB-Septin-like GTPase superfamily. EngA (Der) GTPase family. In terms of assembly, associates with the 50S ribosomal subunit.

In terms of biological role, GTPase that plays an essential role in the late steps of ribosome biogenesis. The protein is GTPase Der of Alteromonas mediterranea (strain DSM 17117 / CIP 110805 / LMG 28347 / Deep ecotype).